The chain runs to 84 residues: CDC42 small effector protein 2-A (84 aa).

Residues Cys10 and Cys11 are each lipidated (S-palmitoyl cysteine). One can recognise a CRIB domain in the interval 29–42 (IGEPTNFVHTAHVG).

Belongs to the CDC42SE/SPEC family.

It is found in the cytoplasm. The protein localises to the cytoskeleton. The protein resides in the cell membrane. Probably involved in the organization of the actin cytoskeleton by acting downstream of CDC42, inducing actin filament assembly. The protein is CDC42 small effector protein 2-A (cdc42se2-A) of Xenopus tropicalis (Western clawed frog).